The primary structure comprises 355 residues: Lamassu protein LmuA (355 aa).

Its function is as follows. Component of antiviral defense system Lamassu type II, composed of LmuA and LmuB. Expression of Lamassu type II in B.subtilis (strain BEST7003) confers resistance to phage SpBeta. May be a nuclease. This chain is Lamassu protein LmuA, found in Bacillus cereus (strain VD014).